Here is a 113-residue protein sequence, read N- to C-terminus: Ribulose bisphosphate carboxylase small subunit (113 aa).

The protein belongs to the RuBisCO small chain family. In terms of assembly, heterohexadecamer of 8 large and 8 small subunits. RuBisCO interacts with the C-terminus of CcmM, and can be found in complexes that also include carbonic anhydrase (ccaA).

The protein resides in the carboxysome. In terms of biological role, ruBisCO catalyzes two reactions: the carboxylation of D-ribulose 1,5-bisphosphate, the primary event in carbon dioxide fixation, as well as the oxidative fragmentation of the pentose substrate in the photorespiration process. Both reactions occur simultaneously and in competition at the same active site. Although the small subunit is not catalytic it is essential for maximal activity. This Synechocystis sp. (strain ATCC 27184 / PCC 6803 / Kazusa) protein is Ribulose bisphosphate carboxylase small subunit.